Reading from the N-terminus, the 462-residue chain is 3-ketoacyl-CoA thiolase 2, peroxisomal (462 aa).

A peroxisome-targeting transit peptide spans Met1–Cys34. Cys138 acts as the Acyl-thioester intermediate in catalysis. Cys138 and Cys192 are disulfide-bonded. Catalysis depends on proton acceptor residues His393 and Cys425.

Belongs to the thiolase-like superfamily. Thiolase family. Forms homodimers. Accumulates in etiolated cotyledons and in seedlings, also present in roots, flowers and siliques (at protein level). High levels in wounded leaves.

Its subcellular location is the peroxisome. It is found in the glyoxysome. The enzyme catalyses an acyl-CoA + acetyl-CoA = a 3-oxoacyl-CoA + CoA. The protein operates within lipid metabolism; fatty acid metabolism. In terms of biological role, involved in long chain fatty-acid beta-oxidation prior to gluconeogenesis during germination and subsequent seedling growth. Confers sensitivity to 2,4-dichlorophenoxybutiric acid (2,4-DB). Required for local and systemic induction of jasmonic acid (JA) biosynthesis after wounding. Seems to be involved in JA biosynthesis during senescence. May be involved in the positive regulation of abscisic acid-activated signaling pathway. The sequence is that of 3-ketoacyl-CoA thiolase 2, peroxisomal (PED1) from Arabidopsis thaliana (Mouse-ear cress).